Here is a 361-residue protein sequence, read N- to C-terminus: Tetraacyldisaccharide 4'-kinase (361 aa).

Residue 68–75 (TVGGTGKT) coordinates ATP.

The protein belongs to the LpxK family.

It catalyses the reaction a lipid A disaccharide + ATP = a lipid IVA + ADP + H(+). The protein operates within glycolipid biosynthesis; lipid IV(A) biosynthesis; lipid IV(A) from (3R)-3-hydroxytetradecanoyl-[acyl-carrier-protein] and UDP-N-acetyl-alpha-D-glucosamine: step 6/6. In terms of biological role, transfers the gamma-phosphate of ATP to the 4'-position of a tetraacyldisaccharide 1-phosphate intermediate (termed DS-1-P) to form tetraacyldisaccharide 1,4'-bis-phosphate (lipid IVA). This chain is Tetraacyldisaccharide 4'-kinase, found in Pelobacter propionicus (strain DSM 2379 / NBRC 103807 / OttBd1).